The sequence spans 946 residues: Bifunctional glutamine synthetase adenylyltransferase/adenylyl-removing enzyme (946 aa).

Residues Met1–Glu440 are adenylyl removase. Residues Ser449 to Glu946 are adenylyl transferase.

Belongs to the GlnE family. The cofactor is Mg(2+).

The enzyme catalyses [glutamine synthetase]-O(4)-(5'-adenylyl)-L-tyrosine + phosphate = [glutamine synthetase]-L-tyrosine + ADP. It catalyses the reaction [glutamine synthetase]-L-tyrosine + ATP = [glutamine synthetase]-O(4)-(5'-adenylyl)-L-tyrosine + diphosphate. Its function is as follows. Involved in the regulation of glutamine synthetase GlnA, a key enzyme in the process to assimilate ammonia. When cellular nitrogen levels are high, the C-terminal adenylyl transferase (AT) inactivates GlnA by covalent transfer of an adenylyl group from ATP to specific tyrosine residue of GlnA, thus reducing its activity. Conversely, when nitrogen levels are low, the N-terminal adenylyl removase (AR) activates GlnA by removing the adenylyl group by phosphorolysis, increasing its activity. The regulatory region of GlnE binds the signal transduction protein PII (GlnB) which indicates the nitrogen status of the cell. The chain is Bifunctional glutamine synthetase adenylyltransferase/adenylyl-removing enzyme from Shigella sonnei (strain Ss046).